The following is a 195-amino-acid chain: MRTAQVSRSTAETEISVSVNLDGSGTYDNQTGVGFFDHMLDQLSRHSLIDMTIRAKGDYHIDDHHTVEDTGIALGQALVQALGDKKGINRYGECHLPMDDAQVRAALDLSARPFLVWNVDLPTQKIGSFDTELVREFFQALATHGGITLHIDQIHGVNSHHIAEAAFKAVARALRTAVEVDPRKADAVPSTKGAL.

Belongs to the imidazoleglycerol-phosphate dehydratase family.

It is found in the cytoplasm. It catalyses the reaction D-erythro-1-(imidazol-4-yl)glycerol 3-phosphate = 3-(imidazol-4-yl)-2-oxopropyl phosphate + H2O. It participates in amino-acid biosynthesis; L-histidine biosynthesis; L-histidine from 5-phospho-alpha-D-ribose 1-diphosphate: step 6/9. The protein is Imidazoleglycerol-phosphate dehydratase of Ruegeria sp. (strain TM1040) (Silicibacter sp.).